Consider the following 318-residue polypeptide: Ferric enterobactin-binding periplasmic protein FepB (318 aa).

An N-terminal signal peptide occupies residues 1–26 (MRLAPLYRNALLLTGLLLSGIAAVQA). One can recognise a Fe/B12 periplasmic-binding domain in the interval 48–318 (RIVSTSVTLT…QVLDRLKALF (271 aa)).

It belongs to the bacterial solute-binding protein 8 family. As to quaternary structure, the complex is composed of two ATP-binding proteins (FepC), two transmembrane proteins (FepD and FepG) and a solute-binding protein (FepB).

It localises to the periplasm. Its function is as follows. Part of the ABC transporter complex FepBDGC involved in ferric enterobactin uptake. Binds ferric enterobactin. The chain is Ferric enterobactin-binding periplasmic protein FepB (fepB) from Escherichia coli O6:H1 (strain CFT073 / ATCC 700928 / UPEC).